We begin with the raw amino-acid sequence, 82 residues long: Protein Vpu (82 aa).

At 1 to 7 (MQPIPIV) the chain is on the extracellular side. Residues 8 to 28 (AIVALVVAIIIAIVVWSIVII) traverse the membrane as a helical segment. The Cytoplasmic segment spans residues 29-82 (EYRKILRQRKIDRLIDRLIERAEDSGNESEGEISALVEMGVEMGHHAPWDVDDL). Phosphoserine; by host CK2 occurs at positions 53 and 57.

This sequence belongs to the HIV-1 VPU protein family. Homopentamer. Interacts with host CD4 and BRTC; these interactions induce proteasomal degradation of CD4. Interacts (via transmembrane region) with host BST2 (via transmembrane region); this interaction leads to the degradation of host BST2. Interacts with host FBXW11. Interacts with host AP1M1; this interaction plays a role in the mistrafficking and subsequent degradation of host BST2. Interacts with host RANBP2; this interaction allows Vpu to down-regulate host BLM sumoylation. In terms of processing, phosphorylated by host CK2. This phosphorylation is necessary for interaction with human BTRC and degradation of CD4.

It localises to the host membrane. Its activity is regulated as follows. Ion channel activity is inhibited by hexamethylene amiloride in vitro. Its function is as follows. Enhances virion budding by targeting host CD4 and Tetherin/BST2 to proteasome degradation. Degradation of CD4 prevents any unwanted premature interactions between viral Env and its host receptor CD4 in the endoplasmic reticulum. Degradation of antiretroviral protein Tetherin/BST2 is important for virion budding, as BST2 tethers new viral particles to the host cell membrane. Mechanistically, Vpu bridges either CD4 or BST2 to BTRC, a substrate recognition subunit of the Skp1/Cullin/F-box protein E3 ubiquitin ligase, induces their ubiquitination and subsequent proteasomal degradation. The alteration of the E3 ligase specificity by Vpu seems to promote the degradation of host IKBKB, leading to NF-kappa-B down-regulation and subsequent apoptosis. Acts as a viroporin that forms an oligomeric ion channel in membranes. Modulates the host DNA repair mechanisms to promote degradation of nuclear viral cDNA in cells that are already productively infected in order to suppress immune sensing and proviral hyper-integration (superinfection). Manipulates PML-NBs and modulates SUMOylation of host BLM protein thereby enhancing its DNA-end processing activity toward viral unintegrated linear DNA. Also inhibits RAD52-mediated homologous repair of viral cDNA, preventing the generation of dead-end circular forms of single copies of the long terminal repeat and permitting sustained nucleolytic attack. The protein is Protein Vpu of Human immunodeficiency virus type 1 group M subtype B (isolate HXB2) (HIV-1).